A 168-amino-acid chain; its full sequence is uncharacterized protein (168 aa).

Positions 7-168 (ERIDTLKTGD…TAKGWPDISM (162 aa)) constitute an N-acetyltransferase domain.

This is an uncharacterized protein from Azospirillum brasilense.